A 254-amino-acid chain; its full sequence is Leucyl/phenylalanyl-tRNA--protein transferase (254 aa).

Residues 1–10 are compositionally biased toward pro residues; it reads MSSQPPPLPW. The interval 1 to 28 is disordered; that stretch reads MSSQPPPLPWLDPNQDFPPTSQAWDENS.

This sequence belongs to the L/F-transferase family.

Its subcellular location is the cytoplasm. The catalysed reaction is N-terminal L-lysyl-[protein] + L-leucyl-tRNA(Leu) = N-terminal L-leucyl-L-lysyl-[protein] + tRNA(Leu) + H(+). The enzyme catalyses N-terminal L-arginyl-[protein] + L-leucyl-tRNA(Leu) = N-terminal L-leucyl-L-arginyl-[protein] + tRNA(Leu) + H(+). It carries out the reaction L-phenylalanyl-tRNA(Phe) + an N-terminal L-alpha-aminoacyl-[protein] = an N-terminal L-phenylalanyl-L-alpha-aminoacyl-[protein] + tRNA(Phe). Its function is as follows. Functions in the N-end rule pathway of protein degradation where it conjugates Leu, Phe and, less efficiently, Met from aminoacyl-tRNAs to the N-termini of proteins containing an N-terminal arginine or lysine. The chain is Leucyl/phenylalanyl-tRNA--protein transferase from Albidiferax ferrireducens (strain ATCC BAA-621 / DSM 15236 / T118) (Rhodoferax ferrireducens).